The chain runs to 423 residues: Flotillin-1 (423 aa).

It belongs to the band 7/mec-2 family. Flotillin subfamily. Heterooligomeric complex of flotillin-1 and flotillin-2 and caveolin-1 and caveolin-2. As to expression, normally expressed in growing retinal exons of newly differentiated ganglion cells at the retinal margin. After optic nerve injury, expressed in all retinal ganglion cells and retinal axons. Also expressed in endothelial cells, spinal cord, larval and adult skin, muscle processes, thymus and gill macrophages.

Its subcellular location is the cell membrane. The protein resides in the endosome. It localises to the membrane. It is found in the caveola. The protein localises to the melanosome. Its subcellular location is the membrane raft. Functionally, may act as a scaffolding protein within caveolar membranes, functionally participating in formation of caveolae or caveolae-like vesicles. This Carassius auratus (Goldfish) protein is Flotillin-1 (flot1).